A 133-amino-acid chain; its full sequence is Late embryogenesis abundant protein B19.3 (133 aa).

The tract at residues 1-133 (MASGQQERSE…IDESKFKTKS (133 aa)) is disordered. Composition is skewed to basic and acidic residues over residues 7-19 (ERSE…REGE), 32-102 (EAQE…EMGR), and 113-133 (GGER…KTKS). Repeat copies occupy residues 24-43 (GGTG…GRSR), 44-63 (GGQT…MGHK), and 64-83 (GGET…MGHK). A 3 X 20 AA tandem repeats region spans residues 24–83 (GGTGGKTLEAQEHLAEGRSRGGQTRKDQLGEEGYREMGHKGGETRKEQLGEEGYREMGHK).

It belongs to the small hydrophilic plant seed protein family.

Its function is as follows. Lea proteins are late embryonic proteins abundant in higher plant seed embryos. The sequence is that of Late embryogenesis abundant protein B19.3 (B19.3) from Hordeum vulgare (Barley).